An 86-amino-acid chain; its full sequence is RNA-binding protein Hfq (86 aa).

Residues 9–68 (DIFLNVLRRERIQVSIYLFNGIKLQGHIESFDQFVIVLKNTISQMVYKHAVSTIVPSKFV) form the Sm domain.

This sequence belongs to the Hfq family. Homohexamer.

Its function is as follows. RNA chaperone that binds small regulatory RNA (sRNAs) and mRNAs to facilitate mRNA translational regulation in response to envelope stress, environmental stress and changes in metabolite concentrations. Also binds with high specificity to tRNAs. The polypeptide is RNA-binding protein Hfq (Baumannia cicadellinicola subsp. Homalodisca coagulata).